Consider the following 224-residue polypeptide: uncharacterized protein (224 aa).

The signal sequence occupies residues 1–19; sequence MLRHITFTVFITTSMNTLA.

Belongs to the periplasmic pilus chaperone family.

The protein resides in the periplasm. Could be required for the biogenesis of a putative fimbria. This is an uncharacterized protein from Escherichia coli (strain K12).